We begin with the raw amino-acid sequence, 243 residues long: Lipid II isoglutaminyl synthase (glutamine-hydrolyzing) subunit GatD (243 aa).

The region spanning 6-197 is the GATase cobBQ-type domain; it reads IYHFMSDKLN…LHGPILPKNY (192 aa). Residue Cys94 is the Nucleophile of the active site. Arg128 serves as a coordination point for substrate. The active site involves His189.

The protein belongs to the CobB/CobQ family. GatD subfamily. In terms of assembly, forms a heterodimer with MurT.

The enzyme catalyses beta-D-GlcNAc-(1-&gt;4)-Mur2Ac(oyl-L-Ala-gamma-D-Glu-L-Lys-D-Ala-D-Ala)-di-trans,octa-cis-undecaprenyl diphosphate + L-glutamine + ATP + H2O = beta-D-GlcNAc-(1-&gt;4)-Mur2Ac(oyl-L-Ala-D-isoglutaminyl-L-Lys-D-Ala-D-Ala)-di-trans,octa-cis-undecaprenyl diphosphate + L-glutamate + ADP + phosphate + H(+). It carries out the reaction L-glutamine + H2O = L-glutamate + NH4(+). It participates in cell wall biogenesis; peptidoglycan biosynthesis. Its function is as follows. The lipid II isoglutaminyl synthase complex catalyzes the formation of alpha-D-isoglutamine in the cell wall lipid II stem peptide. The GatD subunit catalyzes the hydrolysis of glutamine to glutamate and ammonia. The resulting ammonia molecule is channeled to the active site of MurT. The protein is Lipid II isoglutaminyl synthase (glutamine-hydrolyzing) subunit GatD of Staphylococcus aureus (strain N315).